Consider the following 70-residue polypeptide: Exodeoxyribonuclease 7 small subunit (70 aa).

Belongs to the XseB family. Heterooligomer composed of large and small subunits.

The protein localises to the cytoplasm. The enzyme catalyses Exonucleolytic cleavage in either 5'- to 3'- or 3'- to 5'-direction to yield nucleoside 5'-phosphates.. Bidirectionally degrades single-stranded DNA into large acid-insoluble oligonucleotides, which are then degraded further into small acid-soluble oligonucleotides. The chain is Exodeoxyribonuclease 7 small subunit from Streptococcus sanguinis (strain SK36).